We begin with the raw amino-acid sequence, 97 residues long: UPF0213 protein YE0453 (97 aa).

The 76-residue stretch at 4–79 folds into the GIY-YIG domain; sequence SLWHLYLLRT…KQLSKQQKEK (76 aa).

This sequence belongs to the UPF0213 family.

The protein is UPF0213 protein YE0453 of Yersinia enterocolitica serotype O:8 / biotype 1B (strain NCTC 13174 / 8081).